The chain runs to 677 residues: Zinc finger and BTB domain-containing protein 5 (677 aa).

The region spanning 24–93 is the BTB domain; sequence CDCVIVVGNR…MYTSTLMLGE (70 aa). The span at 158-181 shows a compositional bias: polar residues; sequence LNSSQNGEEQPAPMSSSMRSNLDQ. 2 disordered regions span residues 158–252 and 287–312; these read LNSS…MTDN and SMAS…SFQC. At Ser234 the chain carries Phosphoserine. A Glycyl lysine isopeptide (Lys-Gly) (interchain with G-Cter in SUMO2) cross-link involves residue Lys239. Positions 287–300 are enriched in polar residues; sequence SMASRATQVETSFD. Residues Lys322 and Lys330 each participate in a glycyl lysine isopeptide (Lys-Gly) (interchain with G-Cter in SUMO2) cross-link. Residues 331-387 form a disordered region; it reads SEPLSSPEPQDEVSDVTSQAEGSESVEVEGVVVSAEKIDLSPESSDRSFSDPQSSTD. The segment covering 350 to 365 has biased composition (low complexity); sequence AEGSESVEVEGVVVSA. A compositionally biased stretch (basic and acidic residues) spans 366–379; that stretch reads EKIDLSPESSDRSF. Phosphoserine is present on Ser371. Glycyl lysine isopeptide (Lys-Gly) (interchain with G-Cter in SUMO2) cross-links involve residues Lys404 and Lys415. Residues 447 to 474 are disordered; the sequence is LLSPEAGPAGGPSSAPGSHVENPFSEPA. Positions 449-464 are enriched in low complexity; sequence SPEAGPAGGPSSAPGS. Lys541 is covalently cross-linked (Glycyl lysine isopeptide (Lys-Gly) (interchain with G-Cter in SUMO2)). Residues 552–576 are compositionally biased toward polar residues; sequence QIPENSTSSQLMMNGATSSFENGHP. A disordered region spans residues 552-585; it reads QIPENSTSSQLMMNGATSSFENGHPSQPGPPQLT. Glycyl lysine isopeptide (Lys-Gly) (interchain with G-Cter in SUMO2) cross-links involve residues Lys594 and Lys597. The segment at 613–635 adopts a C2H2-type 1 zinc-finger fold; it reads YACKICCKTFLTLTDCKKHIRVH. The C2H2-type 2; atypical zinc-finger motif lies at 641–664; sequence YACLKCGKRFSQSSHLYKHSKTTC. Residues Lys645 and Lys658 each participate in a glycyl lysine isopeptide (Lys-Gly) (interchain with G-Cter in SUMO2) cross-link.

It localises to the nucleus. May be involved in transcriptional regulation. In Homo sapiens (Human), this protein is Zinc finger and BTB domain-containing protein 5 (ZBTB5).